A 359-amino-acid chain; its full sequence is DNA ligase (359 aa).

ATP is bound by residues 32–35 (EIKY), Arg-39, 55–57 (RVS), and Glu-93. The N6-AMP-lysine intermediate role is filled by Lys-34. Residue Glu-217 participates in a divalent metal cation binding. Lys-232 and Lys-238 together coordinate ATP.

The protein belongs to the ATP-dependent DNA ligase family. A divalent metal cation is required as a cofactor.

It catalyses the reaction ATP + (deoxyribonucleotide)n-3'-hydroxyl + 5'-phospho-(deoxyribonucleotide)m = (deoxyribonucleotide)n+m + AMP + diphosphate.. In terms of biological role, DNA ligase that seals nicks in double-stranded DNA during DNA replication, DNA recombination and DNA repair in an ATP-dependent reaction. Binds specifically to DNA nicks containing a 3'-OH and a 5'-phosphate group. In Escherichia phage T7 (Bacteriophage T7), this protein is DNA ligase.